Here is a 458-residue protein sequence, read N- to C-terminus: Bifunctional protein GlmU (458 aa).

The segment at 1-229 (MKEKALSIVI…FMEVEGVNNR (229 aa)) is pyrophosphorylase. UDP-N-acetyl-alpha-D-glucosamine-binding positions include 11-14 (LAAG), Lys25, Gln76, 81-82 (GT), 103-105 (YGD), Gly140, Glu154, Asn169, and Asn227. Residue Asp105 participates in Mg(2+) binding. Asn227 is a binding site for Mg(2+). Residues 230–250 (QQLARLERYYQRKQADNLLLA) are linker. Residues 251-458 (GVALADPERF…WQRPTKQTKK (208 aa)) form an N-acetyltransferase region. Positions 333 and 351 each coordinate UDP-N-acetyl-alpha-D-glucosamine. The active-site Proton acceptor is His363. UDP-N-acetyl-alpha-D-glucosamine contacts are provided by Tyr366 and Asn377. Acetyl-CoA is bound by residues Ala380, 386–387 (NY), Ser405, Ala423, and Arg440.

The protein in the N-terminal section; belongs to the N-acetylglucosamine-1-phosphate uridyltransferase family. In the C-terminal section; belongs to the transferase hexapeptide repeat family. As to quaternary structure, homotrimer. Mg(2+) serves as cofactor.

It localises to the cytoplasm. It carries out the reaction alpha-D-glucosamine 1-phosphate + acetyl-CoA = N-acetyl-alpha-D-glucosamine 1-phosphate + CoA + H(+). It catalyses the reaction N-acetyl-alpha-D-glucosamine 1-phosphate + UTP + H(+) = UDP-N-acetyl-alpha-D-glucosamine + diphosphate. It participates in nucleotide-sugar biosynthesis; UDP-N-acetyl-alpha-D-glucosamine biosynthesis; N-acetyl-alpha-D-glucosamine 1-phosphate from alpha-D-glucosamine 6-phosphate (route II): step 2/2. Its pathway is nucleotide-sugar biosynthesis; UDP-N-acetyl-alpha-D-glucosamine biosynthesis; UDP-N-acetyl-alpha-D-glucosamine from N-acetyl-alpha-D-glucosamine 1-phosphate: step 1/1. The protein operates within bacterial outer membrane biogenesis; LPS lipid A biosynthesis. Functionally, catalyzes the last two sequential reactions in the de novo biosynthetic pathway for UDP-N-acetylglucosamine (UDP-GlcNAc). The C-terminal domain catalyzes the transfer of acetyl group from acetyl coenzyme A to glucosamine-1-phosphate (GlcN-1-P) to produce N-acetylglucosamine-1-phosphate (GlcNAc-1-P), which is converted into UDP-GlcNAc by the transfer of uridine 5-monophosphate (from uridine 5-triphosphate), a reaction catalyzed by the N-terminal domain. The protein is Bifunctional protein GlmU of Pasteurella multocida (strain Pm70).